The chain runs to 151 residues: Ubiquitin-conjugating enzyme E2 2 (151 aa).

One can recognise a UBC core domain in the interval 4–150 (AARRRLMRDF…VRETVEKSWE (147 aa)). Catalysis depends on cysteine 88, which acts as the Glycyl thioester intermediate.

This sequence belongs to the ubiquitin-conjugating enzyme family.

The protein localises to the cytoplasm. It is found in the nucleus. The enzyme catalyses S-ubiquitinyl-[E1 ubiquitin-activating enzyme]-L-cysteine + [E2 ubiquitin-conjugating enzyme]-L-cysteine = [E1 ubiquitin-activating enzyme]-L-cysteine + S-ubiquitinyl-[E2 ubiquitin-conjugating enzyme]-L-cysteine.. It participates in protein modification; protein ubiquitination. Functionally, catalyzes the covalent attachment of ubiquitin to other proteins. Plays a role in transcription regulation by catalyzing the monoubiquitination of histone H2B to form H2BK123ub1. H2BK123ub1 gives a specific tag for epigenetic transcriptional activation and is also a prerequisite for H3K4me and H3K79me formation. Also involved in postreplication repair of UV-damaged DNA, in N-end rule-dependent protein degradation and in sporulation. The polypeptide is Ubiquitin-conjugating enzyme E2 2 (UBC2) (Fusarium solani (Filamentous fungus)).